The primary structure comprises 643 residues: Protein disulfide-isomerase A4 (643 aa).

The signal sequence occupies residues 1 to 20 (MRPRKAWMLVLLLALVQLLA). Thioredoxin domains lie at 21–168 (VASA…EVSQ) and 170–300 (NWTP…EFLK). The tract at residues 24–54 (AGAPDEDSTDKEDAIEEDEEEDEDDDDDDDD) is disordered. Residues 27-54 (PDEDSTDKEDAIEEDEEEDEDDDDDDDD) are compositionally biased toward acidic residues. A CXXC motif is present at residues 90 to 93 (CGHC). Cystine bridges form between Cys90–Cys93 and Cys205–Cys208. Position 365 is an N6-acetyllysine (Lys365). Residues 503–634 (FKKGKLKPVI…LSKFIEEHAT (132 aa)) enclose the Thioredoxin 3 domain. The CXXC motif lies at 553 to 556 (CGHC). A disulfide bridge links Cys553 with Cys556. The Prevents secretion from ER signature appears at 640 to 643 (KEEL).

The protein belongs to the protein disulfide isomerase family. Part of a large chaperone multiprotein complex comprising DNAJB11, HSP90B1, HSPA5, HYOU, PDIA2, PDIA4, PDIA6, PPIB, SDF2L1, UGGT1 and very small amounts of ERP29, but not, or at very low levels, CALR nor CANX. Component of a complex containing at least CRELD2, MANF, MATN3 and PDIA4.

The protein localises to the endoplasmic reticulum lumen. It localises to the melanosome. The enzyme catalyses Catalyzes the rearrangement of -S-S- bonds in proteins.. This chain is Protein disulfide-isomerase A4 (PDIA4), found in Bos taurus (Bovine).